Reading from the N-terminus, the 49-residue chain is Small ribosomal subunit protein uS14B (49 aa).

Belongs to the universal ribosomal protein uS14 family. Zinc-binding uS14 subfamily. Part of the 30S ribosomal subunit.

Binds 16S rRNA, required for the assembly of 30S particles. In Natronomonas pharaonis (strain ATCC 35678 / DSM 2160 / CIP 103997 / JCM 8858 / NBRC 14720 / NCIMB 2260 / Gabara) (Halobacterium pharaonis), this protein is Small ribosomal subunit protein uS14B.